The chain runs to 389 residues: Carbamoyl phosphate synthase small chain (389 aa).

Positions M1–T199 are CPSase. L-glutamine is bound by residues S50, G251, and G253. The region spanning H203–A389 is the Glutamine amidotransferase type-1 domain. Residue C279 is the Nucleophile of the active site. Residues L280, Q283, N321, G323, and F324 each contribute to the L-glutamine site. Active-site residues include H363 and E365.

The protein belongs to the CarA family. Composed of two chains; the small (or glutamine) chain promotes the hydrolysis of glutamine to ammonia, which is used by the large (or ammonia) chain to synthesize carbamoyl phosphate. Tetramer of heterodimers (alpha,beta)4.

It catalyses the reaction hydrogencarbonate + L-glutamine + 2 ATP + H2O = carbamoyl phosphate + L-glutamate + 2 ADP + phosphate + 2 H(+). It carries out the reaction L-glutamine + H2O = L-glutamate + NH4(+). Its pathway is amino-acid biosynthesis; L-arginine biosynthesis; carbamoyl phosphate from bicarbonate: step 1/1. The protein operates within pyrimidine metabolism; UMP biosynthesis via de novo pathway; (S)-dihydroorotate from bicarbonate: step 1/3. Small subunit of the glutamine-dependent carbamoyl phosphate synthetase (CPSase). CPSase catalyzes the formation of carbamoyl phosphate from the ammonia moiety of glutamine, carbonate, and phosphate donated by ATP, constituting the first step of 2 biosynthetic pathways, one leading to arginine and/or urea and the other to pyrimidine nucleotides. The small subunit (glutamine amidotransferase) binds and cleaves glutamine to supply the large subunit with the substrate ammonia. This is Carbamoyl phosphate synthase small chain from Haemophilus ducreyi (strain 35000HP / ATCC 700724).